We begin with the raw amino-acid sequence, 270 residues long: MENPVIIYVISDAIGETAQHIIRAVTAQFSLNKPADIRRHAFIRDENALLETLEEAKAADGIVVQTLVQSKLADYASNFCVKNHLQNVDLLHTLTAAVEAKTGLKSKQDPGNMRRLDSNYFDRIAAIEFAVKYDDCKDPRGLLDADIVLVGVSRTSKTPLSSYLANQNWKVANVPLVPEIPIPDELFQIPAERIIGLTTTPEKLAQIRKVRLKSIGLDEASSYSSEKRILEELEYGYATFKKLGCQVIHVEDKAIEETAALITEIITSYH.

Residue 151–158 participates in ADP binding; the sequence is GVSRTSKT.

It belongs to the pyruvate, phosphate/water dikinase regulatory protein family. PDRP subfamily.

It carries out the reaction N(tele)-phospho-L-histidyl/L-threonyl-[pyruvate, phosphate dikinase] + ADP = N(tele)-phospho-L-histidyl/O-phospho-L-threonyl-[pyruvate, phosphate dikinase] + AMP + H(+). The enzyme catalyses N(tele)-phospho-L-histidyl/O-phospho-L-threonyl-[pyruvate, phosphate dikinase] + phosphate + H(+) = N(tele)-phospho-L-histidyl/L-threonyl-[pyruvate, phosphate dikinase] + diphosphate. Functionally, bifunctional serine/threonine kinase and phosphorylase involved in the regulation of the pyruvate, phosphate dikinase (PPDK) by catalyzing its phosphorylation/dephosphorylation. This chain is Putative pyruvate, phosphate dikinase regulatory protein 2, found in Listeria innocua serovar 6a (strain ATCC BAA-680 / CLIP 11262).